A 467-amino-acid chain; its full sequence is tRNA modification GTPase MnmE (467 aa).

(6S)-5-formyl-5,6,7,8-tetrahydrofolate contacts are provided by Arg25, Glu87, and Lys130. The region spanning 226-389 (GLSVVLAGQP…LRGELLRIAG (164 aa)) is the TrmE-type G domain. Asn236 serves as a coordination point for K(+). GTP is bound by residues 236-241 (NVGKSS), 255-261 (TPIAGTT), and 280-283 (DTAG). Mg(2+) is bound at residue Ser240. Residues Thr255, Ile257, and Thr260 each coordinate K(+). Thr261 is a Mg(2+) binding site. Lys467 contacts (6S)-5-formyl-5,6,7,8-tetrahydrofolate.

Belongs to the TRAFAC class TrmE-Era-EngA-EngB-Septin-like GTPase superfamily. TrmE GTPase family. Homodimer. Heterotetramer of two MnmE and two MnmG subunits. K(+) is required as a cofactor.

It localises to the cytoplasm. Functionally, exhibits a very high intrinsic GTPase hydrolysis rate. Involved in the addition of a carboxymethylaminomethyl (cmnm) group at the wobble position (U34) of certain tRNAs, forming tRNA-cmnm(5)s(2)U34. This Burkholderia thailandensis (strain ATCC 700388 / DSM 13276 / CCUG 48851 / CIP 106301 / E264) protein is tRNA modification GTPase MnmE.